We begin with the raw amino-acid sequence, 189 residues long: Tumor protein p53-inducible protein 11 (189 aa).

Residues methionine 1 to arginine 63 lie on the Cytoplasmic side of the membrane. The residue at position 14 (serine 14) is a Phosphoserine. Residues valine 64–proline 84 traverse the membrane as a helical segment. The Extracellular segment spans residues aspartate 85 to glycine 108. Residues alanine 109–isoleucine 129 traverse the membrane as a helical segment. Arginine 130 is a topological domain (cytoplasmic). The chain crosses the membrane as a helical span at residues tryptophan 131–leucine 151. The Extracellular portion of the chain corresponds to alanine 152–glycine 155. A helical transmembrane segment spans residues leucine 156 to isoleucine 176. Topologically, residues tyrosine 177–valine 189 are cytoplasmic.

It localises to the membrane. This Rattus norvegicus (Rat) protein is Tumor protein p53-inducible protein 11 (Tp53i11).